A 166-amino-acid polypeptide reads, in one-letter code: Phosphopantetheine adenylyltransferase (166 aa).

Ser-11 lines the substrate pocket. ATP contacts are provided by residues 11-12 (SF) and His-19. Residues Lys-43, Ala-76, and Arg-90 each coordinate substrate. ATP contacts are provided by residues 91-93 (GLR), Glu-101, and 126-132 (YRYFSSS).

Belongs to the bacterial CoaD family. As to quaternary structure, homohexamer. Mg(2+) serves as cofactor.

It localises to the cytoplasm. The catalysed reaction is (R)-4'-phosphopantetheine + ATP + H(+) = 3'-dephospho-CoA + diphosphate. Its pathway is cofactor biosynthesis; coenzyme A biosynthesis; CoA from (R)-pantothenate: step 4/5. In terms of biological role, reversibly transfers an adenylyl group from ATP to 4'-phosphopantetheine, yielding dephospho-CoA (dPCoA) and pyrophosphate. This chain is Phosphopantetheine adenylyltransferase, found in Streptococcus mutans serotype c (strain ATCC 700610 / UA159).